A 486-amino-acid polypeptide reads, in one-letter code: Cardiolipin synthase A (486 aa).

2 helical membrane-spanning segments follow: residues 3–23 (TFYT…IAGV) and 38–58 (MAWL…YLSV). PLD phosphodiesterase domains lie at 219–246 (MDLR…VDPR) and 399–426 (EGGL…DMRS). Catalysis depends on residues histidine 224, lysine 226, aspartate 231, histidine 404, lysine 406, and aspartate 411.

The protein belongs to the phospholipase D family. Cardiolipin synthase subfamily. ClsA sub-subfamily.

It localises to the cell inner membrane. It catalyses the reaction 2 a 1,2-diacyl-sn-glycero-3-phospho-(1'-sn-glycerol) = a cardiolipin + glycerol. Functionally, catalyzes the reversible phosphatidyl group transfer from one phosphatidylglycerol molecule to another to form cardiolipin (CL) (diphosphatidylglycerol) and glycerol. This is Cardiolipin synthase A from Salmonella choleraesuis (strain SC-B67).